Reading from the N-terminus, the 294-residue chain is NAD kinase (294 aa).

Residue Asp74 is the Proton acceptor of the active site. NAD(+)-binding positions include 74–75 (DG), Arg79, 149–150 (NE), Asp179, 190–195 (TGYSMS), and Ala214.

It belongs to the NAD kinase family. It depends on a divalent metal cation as a cofactor.

The protein localises to the cytoplasm. The catalysed reaction is NAD(+) + ATP = ADP + NADP(+) + H(+). Involved in the regulation of the intracellular balance of NAD and NADP, and is a key enzyme in the biosynthesis of NADP. Catalyzes specifically the phosphorylation on 2'-hydroxyl of the adenosine moiety of NAD to yield NADP. The protein is NAD kinase of Flavobacterium psychrophilum (strain ATCC 49511 / DSM 21280 / CIP 103535 / JIP02/86).